Consider the following 623-residue polypeptide: MVNQGQPQPNLYDKHINMFPPARARESSHKLGNANSDRHGLPAQNIVPAPYPVDDSIVELTPAIPFTSPSSSSSLSLPLSALNFTDGNADGGQLGTPVTINSNNGMDIFNSKPTGEIGYANNGTNSTGSRYELPFNFSSTKESLGSPAVQDASISSGNRISESVRDNSAPPPYEESESRILQEKVYRTEEKAPIRPLNNNPVPPQKINQPPTGSAKTDDNGSSGGEDKLSSYSPEALAFYQVYKKTITDSSKFTPEIQMQWCETLLTYAFNEDFISQYNINAEKLKRSLKPEEMLKNQKVILEHSFKVLTKLITLKWPPAMYLMGTLYSHQPYLPIKNKNIVIKNDEKALEYYCKAAKLNNSDACYRAGVCFEYQRGTSSLDPSPTKEQCIKKAFQYYQHGAEVCSNSACMYKLGMSHLYGLNMQKTDVLLAIKWFDKAAQKGDSPQTLYELGKIYEFSVLPPEIQNLLFANGIRKDSQLAIKYYQQCAKDFEYPLAQWKLGNCYEFGDLGLPVVAKKSIYWYSKAAAAQPKGNPMAMLSLSGWYLTGAPNILKPNNKEAFNWALKSSKCSDGKLARTEFALGFYYEKGVGCEVDLDLAKQYYQRAARMGFRKAVDALRSLTN.

Positions 141 to 230 (KESLGSPAVQ…GSSGGEDKLS (90 aa)) are disordered. Over residues 152 to 161 (ASISSGNRIS) the composition is skewed to polar residues. Residues 176–193 (SESRILQEKVYRTEEKAP) are compositionally biased toward basic and acidic residues. Glycyl lysine isopeptide (Lys-Gly) (interchain with G-Cter in ubiquitin) cross-links involve residues Lys184 and Lys191. Residues 206–215 (KINQPPTGSA) are compositionally biased toward polar residues. Sel1-like repeat units follow at residues 318–361 (PPAM…KLNN), 408–444 (SACM…QKGD), 495–531 (PLAQ…AAQP), and 576–611 (ARTE…RMGF).

This is Activator of C kinase protein 1 (ACK1) from Saccharomyces cerevisiae (strain ATCC 204508 / S288c) (Baker's yeast).